A 263-amino-acid polypeptide reads, in one-letter code: 3-deoxy-manno-octulosonate cytidylyltransferase (263 aa).

It belongs to the KdsB family.

It localises to the cytoplasm. It catalyses the reaction 3-deoxy-alpha-D-manno-oct-2-ulosonate + CTP = CMP-3-deoxy-beta-D-manno-octulosonate + diphosphate. It functions in the pathway nucleotide-sugar biosynthesis; CMP-3-deoxy-D-manno-octulosonate biosynthesis; CMP-3-deoxy-D-manno-octulosonate from 3-deoxy-D-manno-octulosonate and CTP: step 1/1. It participates in bacterial outer membrane biogenesis; lipopolysaccharide biosynthesis. Activates KDO (a required 8-carbon sugar) for incorporation into bacterial lipopolysaccharide in Gram-negative bacteria. The sequence is that of 3-deoxy-manno-octulosonate cytidylyltransferase from Burkholderia multivorans (strain ATCC 17616 / 249).